The primary structure comprises 420 residues: UDP-N-acetylglucosamine 1-carboxyvinyltransferase (420 aa).

Phosphoenolpyruvate is bound at residue 22–23 (KN). A UDP-N-acetyl-alpha-D-glucosamine-binding site is contributed by Arg-94. The Proton donor role is filled by Cys-118. Cys-118 carries the 2-(S-cysteinyl)pyruvic acid O-phosphothioketal modification. Residues Asp-306 and Ile-328 each coordinate UDP-N-acetyl-alpha-D-glucosamine.

This sequence belongs to the EPSP synthase family. MurA subfamily.

The protein resides in the cytoplasm. It carries out the reaction phosphoenolpyruvate + UDP-N-acetyl-alpha-D-glucosamine = UDP-N-acetyl-3-O-(1-carboxyvinyl)-alpha-D-glucosamine + phosphate. It functions in the pathway cell wall biogenesis; peptidoglycan biosynthesis. Its function is as follows. Cell wall formation. Adds enolpyruvyl to UDP-N-acetylglucosamine. The protein is UDP-N-acetylglucosamine 1-carboxyvinyltransferase of Jannaschia sp. (strain CCS1).